A 189-amino-acid chain; its full sequence is Adenylate kinase (189 aa).

10–15 (AAGKGT) serves as a coordination point for ATP. The segment at 30–59 (STGDMLRAARASGSELGQRVAKIMDEGGLV) is NMP. Residues Thr31, Arg36, 57-59 (GLV), 85-88 (GFPR), and Gln92 contribute to the AMP site. The tract at residues 126-136 (KRFEEQGRADD) is LID. Arg127 is an ATP binding site. 2 residues coordinate AMP: Arg133 and Arg144. Gly172 is a binding site for ATP.

This sequence belongs to the adenylate kinase family. As to quaternary structure, monomer.

The protein resides in the cytoplasm. It carries out the reaction AMP + ATP = 2 ADP. Its pathway is purine metabolism; AMP biosynthesis via salvage pathway; AMP from ADP: step 1/1. Its function is as follows. Catalyzes the reversible transfer of the terminal phosphate group between ATP and AMP. Plays an important role in cellular energy homeostasis and in adenine nucleotide metabolism. The chain is Adenylate kinase from Hyphomonas neptunium (strain ATCC 15444).